Reading from the N-terminus, the 106-residue chain is NADH-quinone oxidoreductase subunit K (106 aa).

3 helical membrane-spanning segments follow: residues 9–29 (LGHY…GIFL), 35–55 (IVML…MVAF), and 70–90 (FILT…VIYF).

Belongs to the complex I subunit 4L family. NDH-1 is composed of 14 different subunits. Subunits NuoA, H, J, K, L, M, N constitute the membrane sector of the complex.

It is found in the cell inner membrane. It catalyses the reaction a quinone + NADH + 5 H(+)(in) = a quinol + NAD(+) + 4 H(+)(out). Its function is as follows. NDH-1 shuttles electrons from NADH, via FMN and iron-sulfur (Fe-S) centers, to quinones in the respiratory chain. The immediate electron acceptor for the enzyme in this species is believed to be ubiquinone. Couples the redox reaction to proton translocation (for every two electrons transferred, four hydrogen ions are translocated across the cytoplasmic membrane), and thus conserves the redox energy in a proton gradient. In Granulibacter bethesdensis (strain ATCC BAA-1260 / CGDNIH1), this protein is NADH-quinone oxidoreductase subunit K.